Consider the following 296-residue polypeptide: N-acetylmuramic acid 6-phosphate etherase 2 (296 aa).

An SIS domain is found at 55 to 218 (IIKSFNQGGR…STISMIGIGK (164 aa)). Glu-83 functions as the Proton donor in the catalytic mechanism. Residue Glu-114 is part of the active site.

The protein belongs to the GCKR-like family. MurNAc-6-P etherase subfamily. As to quaternary structure, homodimer.

The catalysed reaction is N-acetyl-D-muramate 6-phosphate + H2O = N-acetyl-D-glucosamine 6-phosphate + (R)-lactate. The protein operates within amino-sugar metabolism; N-acetylmuramate degradation. In terms of biological role, specifically catalyzes the cleavage of the D-lactyl ether substituent of MurNAc 6-phosphate, producing GlcNAc 6-phosphate and D-lactate. The chain is N-acetylmuramic acid 6-phosphate etherase 2 from Enterococcus faecalis (strain ATCC 700802 / V583).